The sequence spans 128 residues: Ribosome-binding factor A (128 aa).

This sequence belongs to the RbfA family. As to quaternary structure, monomer. Binds 30S ribosomal subunits, but not 50S ribosomal subunits or 70S ribosomes.

It is found in the cytoplasm. One of several proteins that assist in the late maturation steps of the functional core of the 30S ribosomal subunit. Associates with free 30S ribosomal subunits (but not with 30S subunits that are part of 70S ribosomes or polysomes). Required for efficient processing of 16S rRNA. May interact with the 5'-terminal helix region of 16S rRNA. The polypeptide is Ribosome-binding factor A (Haemophilus influenzae (strain 86-028NP)).